The following is a 272-amino-acid chain: Proteasome subunit beta type-5 (272 aa).

The propeptide at 1 to 55 (MKLDTSGLESTAPIFRRSDFVFDGLQMTPSFDLPNPTDFDGFQKEAVQMVKPAKG) is removed in mature form. Catalysis depends on Thr56, which acts as the Nucleophile.

It belongs to the peptidase T1B family. The 26S proteasome consists of a 20S proteasome core and two 19S regulatory subunits. The 20S proteasome core is composed of 28 subunits that are arranged in four stacked rings, resulting in a barrel-shaped structure. The two end rings are each formed by seven alpha subunits, and the two central rings are each formed by seven beta subunits. The catalytic chamber with the active sites is on the inside of the barrel.

It is found in the cytoplasm. Its subcellular location is the nucleus. The enzyme catalyses Cleavage of peptide bonds with very broad specificity.. The proteasome is a multicatalytic proteinase complex which is characterized by its ability to cleave peptides with Arg, Phe, Tyr, Leu, and Glu adjacent to the leaving group at neutral or slightly basic pH. The proteasome has an ATP-dependent proteolytic activity. This chain is Proteasome subunit beta type-5, found in Spinacia oleracea (Spinach).